Reading from the N-terminus, the 816-residue chain is Chitin synthase 1 (816 aa).

The tract at residues 1 to 21 (MLSQGEILRNPSRTRLQRPPK) is disordered. Over 1–32 (MLSQGEILRNPSRTRLQRPPKSRSERKGWWYR) the chain is Cytoplasmic. Residues 33-53 (VTIFLTCLIPNFMLRCFGMTT) traverse the membrane as a helical segment. Over 54–63 (PEVQHAWREK) the chain is Extracellular. A helical membrane pass occupies residues 64 to 84 (VALCICIFFCWIILGFTTYGM). Residues 85–240 (NTIICKGSNQ…TPGCLLADTM (156 aa)) lie on the Cytoplasmic side of the membrane. A helical membrane pass occupies residues 241–261 (FWITTISIFGLIITKFLLGFF). Residues 262–697 (YSWYAKRRPK…QLVVVMELFG (436 aa)) lie on the Extracellular side of the membrane. Asn-319 and Asn-664 each carry an N-linked (GlcNAc...) asparagine glycan. The helical transmembrane segment at 698 to 718 (TLVLPAAIIFTFVMIAVSILI) threads the bilayer. At 719–720 (EP) the chain is on the cytoplasmic side. A helical transmembrane segment spans residues 721-741 (AWVPLIMLVGIFGLPAVLILI). Residues 742 to 745 (TTME) lie on the Extracellular side of the membrane. The helical transmembrane segment at 746 to 766 (IQYVFWCLVYILSIPIWNFVL) threads the bilayer. Residues 767-816 (PTYAFWHFDNFSWGDTRKVDGEGKEDEEGEFDHTKIRIRELEEFLSEANK) are Cytoplasmic-facing.

The protein belongs to the chitin synthase family. Class IV subfamily.

The protein resides in the cell membrane. It carries out the reaction [(1-&gt;4)-N-acetyl-beta-D-glucosaminyl](n) + UDP-N-acetyl-alpha-D-glucosamine = [(1-&gt;4)-N-acetyl-beta-D-glucosaminyl](n+1) + UDP + H(+). Functionally, polymerizes chitin, a structural polymer of the cell wall and septum, by transferring the sugar moiety of UDP-GlcNAc to the non-reducing end of the growing chitin polymer. The chain is Chitin synthase 1 (CHS1) from Encephalitozoon cuniculi (strain GB-M1) (Microsporidian parasite).